A 173-amino-acid polypeptide reads, in one-letter code: Glutamyl-tRNA(Gln) amidotransferase subunit C, mitochondrial (173 aa).

This sequence belongs to the GatC family. Subunit of the heterotrimeric GatCAB amidotransferase (AdT) complex, composed of A, B and C subunits.

The protein resides in the mitochondrion. The catalysed reaction is L-glutamyl-tRNA(Gln) + L-glutamine + ATP + H2O = L-glutaminyl-tRNA(Gln) + L-glutamate + ADP + phosphate + H(+). In terms of biological role, allows the formation of correctly charged Gln-tRNA(Gln) through the transamidation of misacylated Glu-tRNA(Gln) in the mitochondria. The reaction takes place in the presence of glutamine and ATP through an activated gamma-phospho-Glu-tRNA(Gln). The chain is Glutamyl-tRNA(Gln) amidotransferase subunit C, mitochondrial from Drosophila persimilis (Fruit fly).